The sequence spans 415 residues: Probable peptidoglycan glycosyltransferase FtsW (415 aa).

The next 11 membrane-spanning stretches (helical) occupy residues proline 31–alanine 51, phenylalanine 63–leucine 83, leucine 97–histidine 117, isoleucine 133–threonine 153, isoleucine 162–glutamine 182, phenylalanine 185–glutamine 205, tryptophan 206–serine 226, phenylalanine 245–glycine 265, phenylalanine 285–leucine 305, isoleucine 326–asparagine 346, and leucine 361–leucine 381.

The protein belongs to the SEDS family. FtsW subfamily.

It is found in the cell inner membrane. The catalysed reaction is [GlcNAc-(1-&gt;4)-Mur2Ac(oyl-L-Ala-gamma-D-Glu-L-Lys-D-Ala-D-Ala)](n)-di-trans,octa-cis-undecaprenyl diphosphate + beta-D-GlcNAc-(1-&gt;4)-Mur2Ac(oyl-L-Ala-gamma-D-Glu-L-Lys-D-Ala-D-Ala)-di-trans,octa-cis-undecaprenyl diphosphate = [GlcNAc-(1-&gt;4)-Mur2Ac(oyl-L-Ala-gamma-D-Glu-L-Lys-D-Ala-D-Ala)](n+1)-di-trans,octa-cis-undecaprenyl diphosphate + di-trans,octa-cis-undecaprenyl diphosphate + H(+). Its pathway is cell wall biogenesis; peptidoglycan biosynthesis. Peptidoglycan polymerase that is essential for cell division. This chain is Probable peptidoglycan glycosyltransferase FtsW, found in Halothiobacillus neapolitanus (strain ATCC 23641 / c2) (Thiobacillus neapolitanus).